The chain runs to 187 residues: UPF0301 protein YE3428 (187 aa).

It belongs to the UPF0301 (AlgH) family.

In Yersinia enterocolitica serotype O:8 / biotype 1B (strain NCTC 13174 / 8081), this protein is UPF0301 protein YE3428.